A 237-amino-acid polypeptide reads, in one-letter code: uncharacterized protein (237 aa).

The next 7 membrane-spanning stretches (helical) occupy residues 19 to 39 (ILNG…GLAW), 51 to 71 (YDSP…YGLS), 81 to 101 (IAGV…ASLV), 106 to 126 (IIIV…AGLL), 136 to 156 (FIIM…AALM), 159 to 179 (RPIW…ISHG), and 209 to 229 (LYYY…TLVW).

It localises to the cell membrane. This is an uncharacterized protein from Escherichia coli (strain K12).